The chain runs to 394 residues: Cell division protein FtsZ (394 aa).

GTP-binding positions include 21–25, Arg-29, 108–110, Glu-139, Arg-143, Asn-166, and Asp-187; these read GGGNN and GTG. Residues 317–394 form a disordered region; that stretch reads DKPSSQGRKA…EERRSRRTRR (78 aa). 2 stretches are compositionally biased toward low complexity: residues 328–346 and 353–364; these read STGFGSSVNSSSNHQSGAS and SAHTSHSQSSES. Residues 365 to 388 show a composition bias toward basic and acidic residues; sequence VSERSHTTKDDDIPSFIRNREERR.

The protein belongs to the FtsZ family. In terms of assembly, homodimer. Polymerizes to form a dynamic ring structure in a strictly GTP-dependent manner. Interacts directly with several other division proteins.

It localises to the cytoplasm. In terms of biological role, essential cell division protein that forms a contractile ring structure (Z ring) at the future cell division site. The regulation of the ring assembly controls the timing and the location of cell division. One of the functions of the FtsZ ring is to recruit other cell division proteins to the septum to produce a new cell wall between the dividing cells. Binds GTP and shows GTPase activity. The protein is Cell division protein FtsZ of Staphylococcus epidermidis (strain ATCC 35984 / DSM 28319 / BCRC 17069 / CCUG 31568 / BM 3577 / RP62A).